The sequence spans 632 residues: Golgin subfamily A member 8O (632 aa).

A disordered region spans residues 1–76 (MAEETQHNKL…TSSATLKDLE (76 aa)). Residues 38-50 (TNGSIPETATSGG) show a composition bias toward polar residues. Coiled coils occupy residues 85–150 (VLDS…TDLY) and 209–421 (ELEQ…SLMA). 3 disordered regions span residues 423-452 (PGEG…DPES), 505-524 (DAAL…DEGE), and 552-612 (NSAD…EHPG). The segment covering 427 to 440 (HGGEHLDSEGEEAP) has biased composition (basic and acidic residues). Residues 508–520 (LGGGHHQAGAQGG) are compositionally biased toward gly residues. A compositionally biased stretch (basic and acidic residues) spans 569-578 (AADKHGDLRE).

Belongs to the GOLGA6 family.

This is Golgin subfamily A member 8O (GOLGA8O) from Homo sapiens (Human).